Consider the following 206-residue polypeptide: MSSSLSQTSKYQATSVVNGLLSNLLPGVPKIRANNGKTSVNNGSKAQLIDRNLKKRVQLQNRDVHKIKKKCKLVKKKKVKKHKLDKEQLEQLAKHQVLKKHQHEGTLTDHERKYLNKLIKRNSQNLRSWDLEEEVRDELEDIQQSILKDTVSTANTDRSKRRRFKRKQFKEDIKESDFVKDHRYPGLTPGLAPVGLSDEEDSSEED.

Positions 178-206 (FVKDHRYPGLTPGLAPVGLSDEEDSSEED) are disordered. A phosphoserine mark is found at Ser197, Ser202, and Ser203. Acidic residues predominate over residues 197–206 (SDEEDSSEED).

This sequence belongs to the RRT14 family.

It localises to the nucleus. The protein resides in the nucleolus. In terms of biological role, involved in ribosome biogenesis, probably through modulation of rDNA transcription. This chain is Regulator of rDNA transcription protein 14 (RRT14), found in Saccharomyces cerevisiae (strain ATCC 204508 / S288c) (Baker's yeast).